A 274-amino-acid polypeptide reads, in one-letter code: NH(3)-dependent NAD(+) synthetase (274 aa).

46–53 provides a ligand contact to ATP; sequence GISGGQDS. D52 contributes to the Mg(2+) binding site. Residue R140 coordinates deamido-NAD(+). T160 is a binding site for ATP. E165 contributes to the Mg(2+) binding site. Positions 173 and 180 each coordinate deamido-NAD(+). 2 residues coordinate ATP: K189 and T211. 260–261 is a deamido-NAD(+) binding site; sequence HK.

This sequence belongs to the NAD synthetase family. As to quaternary structure, homodimer.

It carries out the reaction deamido-NAD(+) + NH4(+) + ATP = AMP + diphosphate + NAD(+) + H(+). It participates in cofactor biosynthesis; NAD(+) biosynthesis; NAD(+) from deamido-NAD(+) (ammonia route): step 1/1. In terms of biological role, catalyzes the ATP-dependent amidation of deamido-NAD to form NAD. Uses ammonia as a nitrogen source. The protein is NH(3)-dependent NAD(+) synthetase of Streptococcus equi subsp. zooepidemicus (strain MGCS10565).